The following is a 419-amino-acid chain: Cytosine permease (419 aa).

At 1 to 19 the chain is on the cytoplasmic side; sequence MSQDNNFSQGPVPQSARKG. Residues 20–39 traverse the membrane as a helical segment; sequence VLALTFVMLGLTFFSASMWT. The Periplasmic segment spans residues 40–51; that stretch reads GGTLGTGLSYHD. A helical transmembrane segment spans residues 52–71; sequence FFLAVLIGNLLLGIYTSFLG. Topologically, residues 72 to 100 are cytoplasmic; sequence YIGAKTGLTTHLLARFSFGVKGSWLPSLL. A helical transmembrane segment spans residues 101-120; the sequence is LGGTQVGWFGVGVAMFAIPV. Residues 121-127 lie on the Periplasmic side of the membrane; it reads GKATGLD. A helical transmembrane segment spans residues 128-147; it reads INLLIAVSGLLMTVTVFFGI. The Cytoplasmic segment spans residues 148 to 152; sequence SALTV. A helical transmembrane segment spans residues 153–172; sequence LSVIAVPAIACLGGYSVWLA. Topologically, residues 173–192 are periplasmic; that stretch reads VNGMGGLDALKAVVPAQPLD. Residues 193 to 212 form a helical membrane-spanning segment; sequence FNVALALVVGSFISAGTLTA. Topologically, residues 213–221 are cytoplasmic; that stretch reads DFVRFGRNA. Residues 222-242 form a helical membrane-spanning segment; that stretch reads KLAVLVAMVAFFLGNSLMFIF. At 243 to 257 the chain is on the periplasmic side; it reads GAAGAAALGMADISD. A helical membrane pass occupies residues 258–277; sequence VMIAQGLLLPAIVVLGLNIW. Residues 278-300 lie on the Cytoplasmic side of the membrane; the sequence is TTNDNALYASGLGFANITGMSSK. A helical transmembrane segment spans residues 301-320; it reads TLSVINGIIGTVCALWLYNN. Residue Phe321 is a topological domain, periplasmic. A helical transmembrane segment spans residues 322–341; it reads VGWLTFLSAAIPPVGGVIIA. Topologically, residues 342–358 are cytoplasmic; the sequence is DYLMNRRRYEHFATTRM. A helical membrane pass occupies residues 359 to 378; that stretch reads MSVNWVAILAVALGIAAGHW. The Periplasmic portion of the chain corresponds to 379–380; the sequence is LP. A helical transmembrane segment spans residues 381–400; the sequence is GIVPVNAVLGGALSYLILNP. At 401–419 the chain is on the cytoplasmic side; it reads ILNRKTTAAMTHVEANSVE.

This sequence belongs to the purine-cytosine permease (2.A.39) family.

The protein resides in the cell inner membrane. Required for cytosine transport into the cell. This is Cytosine permease (codB) from Escherichia coli O6:H1 (strain CFT073 / ATCC 700928 / UPEC).